The following is a 294-amino-acid chain: MAHGIPSQGKVTITVDEYSSNPTQAFTHYNINQSRFQPPHVHMVDPIPYDTPKPAGHTRFVCISDTHSRTDGIQMPYGDILLHTGDFTELGLPSEVKKFNDWLGNLPYEYKIVIAGNHELTFDKEFMADLVKQDYYRFPSVSKLKPEDFDNVQSLLTNSIYLQDSEVTVKGFRIYGAPWTPWFNGWGFNLPRGQSLLDKWNLIPEGIDILMTHGPPLGFRDWVPKELQRVGCVELLNTVQRRVRPKLHVFGGIHEGYGIMTDGYTTYINASTCTVSFQPTNPPIIFDLPNPQGS.

Residues aspartate 65, histidine 67, aspartate 86, asparagine 117, and histidine 213 each coordinate Mn(2+). 117-118 serves as a coordination point for GMP; sequence NH. GMP is bound by residues 225–226 and 252–255; these read KE and GIHE. Residue histidine 254 participates in Mn(2+) binding.

This sequence belongs to the UPF0046 family. In terms of assembly, homodimer. Mn(2+) serves as cofactor. It depends on Co(2+) as a cofactor. As to expression, expressed predominantly in fetal brain.

Its activity is regulated as follows. Inhibited by nmolar levels of AMP and GMP. Its function is as follows. Displays low metallophosphoesterase activity (in vitro). May play a role in the development of the nervous system. This chain is Metallophosphoesterase MPPED2 (MPPED2), found in Homo sapiens (Human).